We begin with the raw amino-acid sequence, 377 residues long: Opsin-2 (377 aa).

Residues 1 to 57 (MNNQSENYYHGAQFEALKSAGAIEMLGDGLTGDDLAAIPEHWLSYPAPPASAHTALA) are Extracellular-facing. N-linked (GlcNAc...) asparagine glycosylation is present at asparagine 3. Residues 58–78 (LLYIFFTFAALVGNGMVIFIF) traverse the membrane as a helical segment. Residues 79–89 (STTKSLRTSSN) are Cytoplasmic-facing. A helical transmembrane segment spans residues 90-110 (FLVLNLAILDFIMMAKAPIFI). Topologically, residues 111-126 (YNSAMRGFAVGTVGCQ) are extracellular. Cysteine 125 and cysteine 202 form a disulfide bridge. A helical membrane pass occupies residues 127 to 146 (IFALMGAYSGIGAGMTNACI). The Cytoplasmic portion of the chain corresponds to 147-166 (AYDRHSTITRPLDGRLSEGK). The chain crosses the membrane as a helical span at residues 167–187 (VLLMVAFVWIYSTPWALLPLL). Topologically, residues 188 to 214 (KIWGRYVPEGYLTSCSFDYLTNTFDTK) are extracellular. Residues 215–235 (LFVACIFTCSYVFPMSLIIYF) traverse the membrane as a helical segment. Topologically, residues 236–283 (YSGIVKQVFAHEAALREQAKKMNVESLRANQGGSSESAEIRIAKAALT) are cytoplasmic. Residues 284–304 (VCFLFVASWTPYGVMALIGAF) traverse the membrane as a helical segment. Residues 305-314 (GNQQLLTPGV) are Extracellular-facing. The helical transmembrane segment at 315–335 (TMIPAVACKAVACISPWVYAI) threads the bilayer. Residues 336 to 377 (RHPMYRQELQRRMPWLQIDEPDDTVSTATSNTTNSAPPAATA) are Cytoplasmic-facing. The interval 355–377 (EPDDTVSTATSNTTNSAPPAATA) is disordered. Residues 361–377 (STATSNTTNSAPPAATA) show a composition bias toward low complexity.

Belongs to the G-protein coupled receptor 1 family. Opsin subfamily. In the retina, expression is essentially uniformly distributed, but a higher level is seen in the dorsal region of the retina and in the dorsal rim retinulae.

It localises to the membrane. Its function is as follows. Visual pigments are the light-absorbing molecules that mediate vision. They consist of an apoprotein, opsin, covalently linked to cis-retinal. May play a role in photoperiodic photoreception. This is Opsin-2 (OP2) from Manduca sexta (Tobacco hawkmoth).